The chain runs to 192 residues: Peptide methionine sulfoxide reductase MsrA 1 (192 aa).

Cys-25 is an active-site residue.

It belongs to the MsrA Met sulfoxide reductase family.

It carries out the reaction L-methionyl-[protein] + [thioredoxin]-disulfide + H2O = L-methionyl-(S)-S-oxide-[protein] + [thioredoxin]-dithiol. The enzyme catalyses [thioredoxin]-disulfide + L-methionine + H2O = L-methionine (S)-S-oxide + [thioredoxin]-dithiol. In terms of biological role, has an important function as a repair enzyme for proteins that have been inactivated by oxidation. Catalyzes the reversible oxidation-reduction of methionine sulfoxide in proteins to methionine. The protein is Peptide methionine sulfoxide reductase MsrA 1 of Rhodopirellula baltica (strain DSM 10527 / NCIMB 13988 / SH1).